We begin with the raw amino-acid sequence, 49 residues long: uncharacterized protein (49 aa).

This is an uncharacterized protein from Escherichia coli (Bacteriophage T4).